The primary structure comprises 866 residues: Transcription factor E2F8 (866 aa).

A phosphoserine mark is found at Ser71 and Ser102. 2 DNA-binding regions span residues 113 to 182 (RKEK…TWHG) and 261 to 347 (RKDK…KWTG). Disordered regions lie at residues 409–429 (RKIN…STQN), 532–632 (TITP…STTL), and 794–837 (TNGQ…GSPC). Residues Ser413 and Ser417 each carry the phosphoserine modification. Polar residues predominate over residues 543 to 552 (VCPTTSSNAM). Basic and acidic residues-rich tracts occupy residues 588–603 (QGAK…EKGS) and 612–624 (SGSK…DQKA). Residues 794–805 (TNGQSFAGTGAQ) show a composition bias toward polar residues. Positions 825–834 (TPGGPTKPTG) are enriched in low complexity.

Belongs to the E2F/DP family. As to quaternary structure, homodimer and heterodimer: mainly forms homodimers and, to a lesser extent, heterodimers with E2F8. Dimerization is important for DNA-binding. Interacts with HIF1A.

It localises to the nucleus. Functionally, atypical E2F transcription factor that participates in various processes such as angiogenesis and polyploidization of specialized cells. Mainly acts as a transcription repressor that binds DNA independently of DP proteins and specifically recognizes the E2 recognition site 5'-TTTC[CG]CGC-3'. Directly represses transcription of classical E2F transcription factors such as E2F1: component of a feedback loop in S phase by repressing the expression of E2F1, thereby preventing p53/TP53-dependent apoptosis. Plays a key role in polyploidization of cells in placenta and liver by regulating the endocycle, probably by repressing genes promoting cytokinesis and antagonizing action of classical E2F proteins (E2F1, E2F2 and/or E2F3). Required for placental development by promoting polyploidization of trophoblast giant cells. Acts as a promoter of sprouting angiogenesis, possibly by acting as a transcription activator: associates with HIF1A, recognizes and binds the VEGFA promoter, which is different from canonical E2 recognition site, and activates expression of the VEGFA gene. This Bos taurus (Bovine) protein is Transcription factor E2F8 (E2F8).